The primary structure comprises 339 residues: Small ribosomal subunit biogenesis GTPase RsgA (339 aa).

A CP-type G domain is found at 111 to 271; sequence MRGLLKPVAA…LIDSPGIREF (161 aa). Residues 159-162 and 213-221 contribute to the GTP site; these read NKAD and GQSGVGKSS. Zn(2+)-binding residues include Cys-295, Cys-300, His-302, and Cys-308.

It belongs to the TRAFAC class YlqF/YawG GTPase family. RsgA subfamily. As to quaternary structure, monomer. Associates with 30S ribosomal subunit, binds 16S rRNA. Zn(2+) serves as cofactor.

The protein resides in the cytoplasm. One of several proteins that assist in the late maturation steps of the functional core of the 30S ribosomal subunit. Helps release RbfA from mature subunits. May play a role in the assembly of ribosomal proteins into the subunit. Circularly permuted GTPase that catalyzes slow GTP hydrolysis, GTPase activity is stimulated by the 30S ribosomal subunit. This chain is Small ribosomal subunit biogenesis GTPase RsgA, found in Pseudomonas aeruginosa (strain UCBPP-PA14).